Here is a 308-residue protein sequence, read N- to C-terminus: 1D-myo-inositol 2-acetamido-2-deoxy-alpha-D-glucopyranoside deacetylase (308 aa).

Residues His37, Asp40, and His171 each contribute to the Zn(2+) site.

This sequence belongs to the MshB deacetylase family. It depends on Zn(2+) as a cofactor.

The enzyme catalyses 1D-myo-inositol 2-acetamido-2-deoxy-alpha-D-glucopyranoside + H2O = 1D-myo-inositol 2-amino-2-deoxy-alpha-D-glucopyranoside + acetate. Functionally, catalyzes the deacetylation of 1D-myo-inositol 2-acetamido-2-deoxy-alpha-D-glucopyranoside (GlcNAc-Ins) in the mycothiol biosynthesis pathway. The polypeptide is 1D-myo-inositol 2-acetamido-2-deoxy-alpha-D-glucopyranoside deacetylase (Mycobacterium sp. (strain JLS)).